A 277-amino-acid polypeptide reads, in one-letter code: Large ribosomal subunit protein uL15c (277 aa).

The N-terminal 67 residues, 1-67 (MATPLSISSN…FARPLVVVSQ (67 aa)), are a transit peptide targeting the chloroplast. Thr68 carries the post-translational modification N-acetylthreonine. The tract at residues 81–125 (FRLDNLGPQPGSRKKQKRKGRGISAGQGASCGFGMRGQKSRSGPG) is disordered. A compositionally biased stretch (basic residues) spans 92 to 101 (SRKKQKRKGR). Residues 103–115 (ISAGQGASCGFGM) are compositionally biased toward gly residues.

Belongs to the universal ribosomal protein uL15 family. In terms of assembly, part of the 50S ribosomal subunit.

The protein resides in the plastid. It localises to the chloroplast. This is Large ribosomal subunit protein uL15c (RPL15) from Arabidopsis thaliana (Mouse-ear cress).